Here is a 197-residue protein sequence, read N- to C-terminus: Isopentenyl-diphosphate Delta-isomerase (197 aa).

2 residues coordinate Mn(2+): H41 and H48. Positions 46-183 (RLHRAFSVFL…AWFMTVLDAA (138 aa)) constitute a Nudix hydrolase domain. C83 is a catalytic residue. C83 contributes to the Mg(2+) binding site. H85 is a binding site for Mn(2+). E103 serves as a coordination point for Mg(2+). Mn(2+) contacts are provided by E130 and E132. The active site involves E132.

This sequence belongs to the IPP isomerase type 1 family. It depends on Mg(2+) as a cofactor. Requires Mn(2+) as cofactor.

The protein resides in the cytoplasm. It catalyses the reaction isopentenyl diphosphate = dimethylallyl diphosphate. It functions in the pathway isoprenoid biosynthesis; dimethylallyl diphosphate biosynthesis; dimethylallyl diphosphate from isopentenyl diphosphate: step 1/1. In terms of biological role, catalyzes the 1,3-allylic rearrangement of the homoallylic substrate isopentenyl (IPP) to its highly electrophilic allylic isomer, dimethylallyl diphosphate (DMAPP). In Streptomyces coelicolor (strain ATCC BAA-471 / A3(2) / M145), this protein is Isopentenyl-diphosphate Delta-isomerase.